We begin with the raw amino-acid sequence, 317 residues long: Transaldolase (317 aa).

K132 functions as the Schiff-base intermediate with substrate in the catalytic mechanism.

Belongs to the transaldolase family. Type 1 subfamily. Homodimer.

It is found in the cytoplasm. It carries out the reaction D-sedoheptulose 7-phosphate + D-glyceraldehyde 3-phosphate = D-erythrose 4-phosphate + beta-D-fructose 6-phosphate. It participates in carbohydrate degradation; pentose phosphate pathway; D-glyceraldehyde 3-phosphate and beta-D-fructose 6-phosphate from D-ribose 5-phosphate and D-xylulose 5-phosphate (non-oxidative stage): step 2/3. In terms of biological role, transaldolase is important for the balance of metabolites in the pentose-phosphate pathway. The polypeptide is Transaldolase (Histophilus somni (strain 129Pt) (Haemophilus somnus)).